A 393-amino-acid chain; its full sequence is Dwarfin sma-3 (393 aa).

Residues 10–139 form the MH1 domain; sequence PAVKKLLGWK…YQRLSRPQGL (130 aa). Positions 65, 110, 124, and 129 each coordinate Zn(2+). Positions 136–190 are disordered; that stretch reads PQGLNSSMPSPQPISSPNTIWQSSGSSTASCASSPSPSVFSEDGGEVQVHQRPPP. Low complexity predominate over residues 141 to 176; the sequence is SSMPSPQPISSPNTIWQSSGSSTASCASSPSPSVFS. The 197-residue stretch at 197–393 folds into the MH2 domain; that stretch reads WAQITYFELN…TNLMEPNSMT (197 aa).

The protein belongs to the dwarfin/SMAD family.

It is found in the cytoplasm. The protein resides in the nucleus. Involved in TGF-beta pathway. Plays a role in male tail tip morphogenesis. The polypeptide is Dwarfin sma-3 (Caenorhabditis elegans).